We begin with the raw amino-acid sequence, 22 residues long: 5-methyltetrahydropteroyltriglutamate--homocysteine methyltransferase (22 aa).

The protein belongs to the vitamin-B12 independent methionine synthase family. Zn(2+) is required as a cofactor.

The protein resides in the cytoplasm. It carries out the reaction 5-methyltetrahydropteroyltri-L-glutamate + L-homocysteine = tetrahydropteroyltri-L-glutamate + L-methionine. It participates in amino-acid biosynthesis; L-methionine biosynthesis via de novo pathway; L-methionine from L-homocysteine (MetE route): step 1/1. Catalyzes the transfer of a methyl group from 5-methyltetrahydrofolate to homocysteine resulting in methionine formation. This is 5-methyltetrahydropteroyltriglutamate--homocysteine methyltransferase from Pseudotsuga menziesii (Douglas-fir).